The chain runs to 505 residues: Serine carboxypeptidase-like 47 (505 aa).

Residues 1-22 (MEAKTFFLFMLFIFSQSWLSTS) form the signal peptide. 3 N-linked (GlcNAc...) asparagine glycosylation sites follow: N37, N86, and N122. Disulfide bonds link C138–C378, C306–C321, and C344–C349. The active site involves S228. N-linked (GlcNAc...) asparagine glycosylation occurs at N301. Residue D416 is part of the active site. 2 N-linked (GlcNAc...) asparagine glycosylation sites follow: N432 and N444. H473 is a catalytic residue.

It belongs to the peptidase S10 family. Expressed in roots, flowers and siliques.

The protein localises to the secreted. Functionally, probable carboxypeptidase. This chain is Serine carboxypeptidase-like 47 (SCPL47), found in Arabidopsis thaliana (Mouse-ear cress).